Reading from the N-terminus, the 331-residue chain is Calcium-binding and coiled-coil domain-containing protein 2 (331 aa).

The short motif at 128 to 131 is the CLIR element; it reads IMVV. A coiled-coil region spans residues 132-309; it reads INKEKVEEME…EKASWEKEKA (178 aa). The segment at 189-310 is disordered; it reads KASWEKEKAS…KASWEKEKAP (122 aa). Positions 190 to 193 match the LIR-like motif; it reads ASWE. An interaction with LGALS8 region spans residues 292–302; the sequence is KEKASWEEEKA.

This sequence belongs to the CALCOCO family. As to quaternary structure, dimer. Part of a complex consisting of CALCOCO2, TAX1BP1 and MYO6. Interacts with MYO6. Interacts with GEMIN4. Interacts with ATG8 family members MAP1LC3A, MAP1LC3B, GABARAP, GABARAPL1 and GABARAPL2. Interacts with ATG8 family member MAP1LC3C. Interacts with LGALS8. Interacts with TOM1; the interaction is indirect and is mediated by MYO6, which acts as a bridge between TOM1 and CALCOCO2. Interacts with AZI2.

It localises to the cytoplasm. The protein resides in the perinuclear region. The protein localises to the cytoskeleton. Its subcellular location is the cytoplasmic vesicle. It is found in the autophagosome membrane. Its function is as follows. Xenophagy-specific receptor required for autophagy-mediated intracellular bacteria degradation. Acts as an effector protein of galectin-sensed membrane damage that restricts the proliferation of infecting pathogens upon entry into the cytosol by targeting LGALS8-associated bacteria for autophagy. Initially orchestrates bacteria targeting to autophagosomes and subsequently ensures pathogen degradation by regulating pathogen-containing autophagosome maturation. Bacteria targeting to autophagosomes relies on its interaction with MAP1LC3A, MAP1LC3B and/or GABARAPL2, whereas regulation of pathogen-containing autophagosome maturation requires the interaction with MAP3LC3C. May play a role in ruffle formation and actin cytoskeleton organization and seems to negatively regulate constitutive secretion. This is Calcium-binding and coiled-coil domain-containing protein 2 from Mus musculus (Mouse).